Here is a 293-residue protein sequence, read N- to C-terminus: Pyridoxal 5'-phosphate synthase subunit PdxS (293 aa).

Aspartate 23 is a D-ribose 5-phosphate binding site. Lysine 80 serves as the catalytic Schiff-base intermediate with D-ribose 5-phosphate. Glycine 152 is a binding site for D-ribose 5-phosphate. Arginine 164 contacts D-glyceraldehyde 3-phosphate. D-ribose 5-phosphate is bound by residues glycine 213 and 234 to 235; that span reads GS.

The protein belongs to the PdxS/SNZ family. In terms of assembly, in the presence of PdxT, forms a dodecamer of heterodimers.

The catalysed reaction is aldehydo-D-ribose 5-phosphate + D-glyceraldehyde 3-phosphate + L-glutamine = pyridoxal 5'-phosphate + L-glutamate + phosphate + 3 H2O + H(+). It functions in the pathway cofactor biosynthesis; pyridoxal 5'-phosphate biosynthesis. Its function is as follows. Catalyzes the formation of pyridoxal 5'-phosphate from ribose 5-phosphate (RBP), glyceraldehyde 3-phosphate (G3P) and ammonia. The ammonia is provided by the PdxT subunit. Can also use ribulose 5-phosphate and dihydroxyacetone phosphate as substrates, resulting from enzyme-catalyzed isomerization of RBP and G3P, respectively. This chain is Pyridoxal 5'-phosphate synthase subunit PdxS, found in Roseiflexus castenholzii (strain DSM 13941 / HLO8).